The chain runs to 195 residues: ATP-dependent Clp protease proteolytic subunit 2 (195 aa).

The active-site Nucleophile is Ser-95. The active site involves His-120.

It belongs to the peptidase S14 family. In terms of assembly, fourteen ClpP subunits assemble into 2 heptameric rings which stack back to back to give a disk-like structure with a central cavity, resembling the structure of eukaryotic proteasomes.

The protein localises to the cytoplasm. It catalyses the reaction Hydrolysis of proteins to small peptides in the presence of ATP and magnesium. alpha-casein is the usual test substrate. In the absence of ATP, only oligopeptides shorter than five residues are hydrolyzed (such as succinyl-Leu-Tyr-|-NHMec, and Leu-Tyr-Leu-|-Tyr-Trp, in which cleavage of the -Tyr-|-Leu- and -Tyr-|-Trp bonds also occurs).. Its function is as follows. Cleaves peptides in various proteins in a process that requires ATP hydrolysis. Has a chymotrypsin-like activity. Plays a major role in the degradation of misfolded proteins. This is ATP-dependent Clp protease proteolytic subunit 2 from Methylococcus capsulatus (strain ATCC 33009 / NCIMB 11132 / Bath).